We begin with the raw amino-acid sequence, 610 residues long: Glutamine--fructose-6-phosphate aminotransferase [isomerizing] (610 aa).

Cys-2 (nucleophile; for GATase activity) is an active-site residue. The Glutamine amidotransferase type-2 domain occupies 2-219 (CGIVGYAGKK…SGEWGYFSQN (218 aa)). 2 consecutive SIS domains span residues 287-431 (SKDV…SDEE) and 459-600 (MSSH…PDQP). Catalysis depends on Lys-605, which acts as the For Fru-6P isomerization activity.

In terms of assembly, homodimer.

The protein localises to the cytoplasm. It catalyses the reaction D-fructose 6-phosphate + L-glutamine = D-glucosamine 6-phosphate + L-glutamate. In terms of biological role, catalyzes the first step in hexosamine metabolism, converting fructose-6P into glucosamine-6P using glutamine as a nitrogen source. The sequence is that of Glutamine--fructose-6-phosphate aminotransferase [isomerizing] from Leptospira interrogans serogroup Icterohaemorrhagiae serovar copenhageni (strain Fiocruz L1-130).